We begin with the raw amino-acid sequence, 118 residues long: Small integral membrane protein 17 (118 aa).

Positions Met-1 to Phe-84 are disordered. Residues Leu-13 to Glu-42 show a composition bias toward basic and acidic residues. Residues Ile-96 to Phe-116 traverse the membrane as a helical segment.

The protein localises to the membrane. The protein is Small integral membrane protein 17 (SMIM17) of Homo sapiens (Human).